The following is a 306-amino-acid chain: Armadillo repeat-containing protein 10 (306 aa).

Residues 7-29 (VGWVAAGLVLGAGACYCIYRLTR) traverse the membrane as a helical segment. Ser-43 bears the Phosphoserine mark. A Phosphothreonine modification is found at Thr-48. Residues 101–143 (GGIPIVGNKINSLNQSIKEKALNALNNLSVNVENQTKIKIYVP) form an ARM repeat.

In terms of assembly, interacts with the DNA-binding domain of p53/TP53.

The protein localises to the endoplasmic reticulum membrane. The protein resides in the mitochondrion outer membrane. Its function is as follows. May play a role in cell survival and cell growth. May suppress the transcriptional activity of p53/TP53. This chain is Armadillo repeat-containing protein 10 (Armc10), found in Mus musculus (Mouse).